Reading from the N-terminus, the 1487-residue chain is Probable serine/threonine-protein kinase roco11 (1487 aa).

Positions 108 to 134 (TQPSSSHNHSNHHHHHHQQQLQQQQQQ) are disordered. The span at 116–125 (HSNHHHHHHQ) shows a compositional bias: basic residues. LRR repeat units lie at residues 295–316 (NLAE…ICQL), 318–340 (HLKI…ANLT), and 341–362 (NLKY…IIEQ). The Roc domain maps to 379–564 (KSETWNKVKL…KILTNEAEKS (186 aa)). The interval 379–564 (KSETWNKVKL…KILTNEAEKS (186 aa)) is small GTPase-like. GTP is bound by residues 392–399 (GQEGVGKS), 448–452 (DFGGQ), and 507–510 (THCD). One can recognise a COR domain in the interval 678-872 (VNQKYIDYND…KTYWANGILL (195 aa)). Residues 891–1007 (SILPNNSSST…NNNNNNNNNI (117 aa)) form a disordered region. Over residues 897–931 (SSSTSSSTSSSTSSSTSSSSSSSTSSSSTSTTTTT) the composition is skewed to low complexity. Polar residues predominate over residues 932 to 950 (VQIQSSPFGNSTTIVNKLT). Low complexity predominate over residues 951–1007 (NIDNNNNNNNNNNNNNNNNNNINNNNNNNNNNNNNNNNNNNNNNNNNNNNNNNNNNI). Residues 1185–1452 (VVCEEQIGVG…YIVKELTNFY (268 aa)) form the Protein kinase domain. Residues 1191 to 1199 (IGVGGFGLV) and K1216 each bind ATP. The active-site Proton acceptor is D1313. A disordered region spans residues 1464–1487 (KSINDKSPHPDLISNGVPKLQIAK).

It belongs to the protein kinase superfamily. TKL Ser/Thr protein kinase family. ROCO subfamily.

The catalysed reaction is L-seryl-[protein] + ATP = O-phospho-L-seryl-[protein] + ADP + H(+). It catalyses the reaction L-threonyl-[protein] + ATP = O-phospho-L-threonyl-[protein] + ADP + H(+). In Dictyostelium discoideum (Social amoeba), this protein is Probable serine/threonine-protein kinase roco11 (roco11).